The sequence spans 1690 residues: Collagen alpha-4(IV) chain (1690 aa).

An N-terminal signal peptide occupies residues 1-38; it reads MWSLHIVLMRCSFRLTKSLATGPWSLILILFSVQYVYG. Positions 39–64 are 7S domain; that stretch reads SGKKYIGPCGGRDCSVCHCVPEKGSR. Disordered stretches follow at residues 61–173 and 187–258; these read KGSR…GEKG and GDRG…GPTL. The triple-helical region stretch occupies residues 65–1459; it reads GPPGPPGPQG…IGDPGPKGFG (1395 aa). Residues 66–75 are compositionally biased toward pro residues; it reads PPGPPGPQGP. Residues 76–88 show a composition bias toward low complexity; sequence IGPLGAPGPIGLS. The Cell attachment site motif lies at 94 to 96; it reads RGD. Asn-142 carries an N-linked (GlcNAc...) asparagine glycan. The short motif at 145 to 147 is the Cell attachment site element; that stretch reads RGD. Positions 149–164 are enriched in gly residues; the sequence is GFPGGRGALGPGGPLG. Positions 189-191 match the Cell attachment site motif; that stretch reads RGD. Positions 199 to 208 are enriched in gly residues; that stretch reads GSWGAGGPAG. Residues 310–312 carry the Cell attachment site motif; it reads RGD. Disordered stretches follow at residues 369 to 390, 405 to 451, and 469 to 1457; these read PGDPGFPGRYGETGDVGPPGPP, GPPG…GLQG, and GIKG…GPKG. Over residues 412–434 the composition is skewed to low complexity; sequence FPGLPGLPGEAGIPGRPDSAPGK. Pro residues-rich tracts occupy residues 498 to 507 and 529 to 540; these read PMGPPGPPGL and PGPPGAEGPPGL. A compositionally biased stretch (basic and acidic residues) spans 586–607; the sequence is HGRDGHAGEKGDPGPPGDHEDA. A compositionally biased stretch (low complexity) spans 644 to 655; the sequence is PGVPGHPGVRGP. Residue Asn-669 is glycosylated (N-linked (GlcNAc...) asparagine). Residues 681-690 show a composition bias toward pro residues; that stretch reads FDGPPGPKGF. 2 short sequence motifs (cell attachment site) span residues 724–726 and 785–787; these read RGD. Positions 849–858 are enriched in gly residues; that stretch reads GAPGGKGQPG. 2 stretches are compositionally biased toward low complexity: residues 866–880 and 907–917; these read AGMKGLPGLPGRPGA and PRGLPGFPGFP. A Cell attachment site motif is present at residues 989-991; that stretch reads RGD. The span at 1023–1032 shows a compositional bias: pro residues; the sequence is PGPPGPPGPP. The span at 1108 to 1117 shows a compositional bias: low complexity; it reads PGIQGPRGSP. A compositionally biased stretch (pro residues) spans 1119 to 1131; it reads RPGPPGSSGPPGC. A Cell attachment site motif is present at residues 1212–1214; sequence RGD. 5 stretches are compositionally biased toward pro residues: residues 1220–1243, 1256–1280, 1297–1309, 1338–1353, and 1443–1452; these read ISPPGPRGKKGPPGPPGSSGPPGP, DPGPPGDQGPPGPDGPRGAPGPPGL, PGPPGPPGPPGPP, FPGPPGEKGLPGPPGR, and GPGPPGPIGD. The Collagen IV NC1 domain maps to 1465–1690; it reads GFLLVLHSQT…SRCQVCVKYS (226 aa). 6 cysteine pairs are disulfide-bonded: Cys-1480/Cys-1569, Cys-1513/Cys-1566, Cys-1525/Cys-1531, Cys-1588/Cys-1686, Cys-1622/Cys-1683, and Cys-1634/Cys-1641.

It belongs to the type IV collagen family. There are six type IV collagen isoforms, alpha 1(IV)-alpha 6(IV), each of which can form a triple helix structure with 2 other chains to generate type IV collagen network. The alpha 3(IV) chain forms a triple helical protomer with alpha 4(IV) and alpha 5(IV); this triple helical structure dimerizes through NC1-NC1 domain interactions such that the alpha 3(IV), alpha 4(IV) and alpha 5(IV) chains of one protomer connect with the alpha 5(IV), alpha 4(IV) and alpha 3(IV) chains of the opposite protomer, respectively. Associates with LAMB2 at the neuromuscular junction and in GBM. Post-translationally, prolines at the third position of the tripeptide repeating unit (G-X-Y) are hydroxylated in some or all of the chains. Type IV collagens contain numerous cysteine residues which are involved in inter- and intramolecular disulfide bonding. 12 of these, located in the NC1 domain, are conserved in all known type IV collagens. In terms of processing, the trimeric structure of the NC1 domains is stabilized by covalent bonds between Lys and Met residues. As to expression, expressed in Bruch's membrane, outer plexiform layer, inner nuclear layer, inner plexiform layer, ganglion cell layer, inner limiting membrane and around the blood vessels of the retina (at protein level). Alpha 3 and alpha 4 type IV collagens are colocalized and present in kidney, eye, basement membranes of lens capsule, cochlea, lung, skeletal muscle, aorta, synaptic fibers, fetal kidney and fetal lung. PubMed:8083201 reports similar levels of expression of alpha 3 and alpha 4 type IV collagens in kidney, but PubMed:7523402 reports that in kidney levels of alpha 3 type IV collagen are significantly lower than those of alpha 4 type IV collagen. Highest levels of expression of alpha 4 type IV collagen are detected in kidney, calvaria, neuroretina and cardiac muscle. Lower levels of expression are observed in brain, lung and thymus, and no expression is detected in choroid plexus, liver, adrenal, pancreas, ileum or skin.

It is found in the secreted. It localises to the extracellular space. The protein resides in the extracellular matrix. Its subcellular location is the basement membrane. Its function is as follows. Type IV collagen is the major structural component of glomerular basement membranes (GBM), forming a 'chicken-wire' meshwork together with laminins, proteoglycans and entactin/nidogen. This chain is Collagen alpha-4(IV) chain (COL4A4), found in Homo sapiens (Human).